The sequence spans 567 residues: PHD finger protein 1 (567 aa).

The disordered stretch occupies residues 1–31; that stretch reads MAQPPRLSRSGASSLWDPASPAPTSGPRPRL. Residues 29–86 enclose the Tudor domain; it reads PRLWEGQDVLARWTDGLLYLGTIKKVDSAREVCLVQFEDDSQFLVLWKDISPAALPGE. PHD-type zinc fingers lie at residues 87 to 142 and 186 to 240; these read ELLC…CVFA and QSYC…CRGG. 2 disordered regions span residues 333-441 and 455-537; these read ARMP…TDAR and HPSA…GYLS. Residue Gly360 is modified to Phosphoserine. Over residues 371–386 the composition is skewed to basic and acidic residues; it reads PEPEPLRRRQKGKVEE. Ser420 is modified (phosphoserine). 3 stretches are compositionally biased toward low complexity: residues 423-433, 456-470, and 488-510; these read PNQSYQGSSGY, PSAS…SGPP, and SAPH…LPRR. Gly residues predominate over residues 524-534; sequence GTGGGVRGGVG.

This sequence belongs to the Polycomblike family. As to quaternary structure, interacts with CHMP1. Associated component of the PRC2 complex. Interacts with p53/TP53. In terms of tissue distribution, highest levels in heart, skeletal muscle, and pancreas, lower levels in brain, placenta, lung, liver and kidney.

The protein localises to the nucleus. The protein resides in the cytoplasm. It is found in the cytoskeleton. Its subcellular location is the microtubule organizing center. It localises to the centrosome. Its function is as follows. Polycomb group (PcG) that specifically binds histone H3 trimethylated at 'Lys-36' (H3K36me3) and recruits the PRC2 complex. Involved in DNA damage response and is recruited at double-strand breaks (DSBs). Acts by binding to H3K36me3, a mark for transcriptional activation, and recruiting the PRC2 complex: it is however unclear whether recruitment of the PRC2 complex to H3K36me3 leads to enhance or inhibit H3K27me3 methylation mediated by the PRC2 complex. According to some reports, PRC2 recruitment by PHF1 promotes H3K27me3 and subsequent gene silencing by inducing spreading of PRC2 and H3K27me3 into H3K36me3 loci. According to another report, PHF1 recruits the PRC2 complex at double-strand breaks (DSBs) and inhibits the activity of PRC2. Regulates p53/TP53 stability and prolonges its turnover: may act by specifically binding to a methylated from of p53/TP53. The chain is PHD finger protein 1 (PHF1) from Homo sapiens (Human).